Reading from the N-terminus, the 157-residue chain is Ribosomal RNA large subunit methyltransferase H (157 aa).

S-adenosyl-L-methionine-binding positions include Leu73, Gly105, and 124 to 129 (LSRMTF).

Belongs to the RNA methyltransferase RlmH family. Homodimer.

It localises to the cytoplasm. It carries out the reaction pseudouridine(1915) in 23S rRNA + S-adenosyl-L-methionine = N(3)-methylpseudouridine(1915) in 23S rRNA + S-adenosyl-L-homocysteine + H(+). Functionally, specifically methylates the pseudouridine at position 1915 (m3Psi1915) in 23S rRNA. The protein is Ribosomal RNA large subunit methyltransferase H of Porphyromonas gingivalis (strain ATCC BAA-308 / W83).